The following is a 441-amino-acid chain: Queuine tRNA-ribosyltransferase accessory subunit 2 (441 aa).

Residues Cys-307, Cys-309, Cys-312, and His-338 each coordinate Zn(2+).

The protein belongs to the queuine tRNA-ribosyltransferase family. QTRT2 subfamily. In terms of assembly, heterodimer of a catalytic subunit and an accessory subunit. The cofactor is Zn(2+).

The protein localises to the cytoplasm. In terms of biological role, non-catalytic subunit of the queuine tRNA-ribosyltransferase (TGT) that catalyzes the base-exchange of a guanine (G) residue with queuine (Q) at position 34 (anticodon wobble position) in tRNAs with GU(N) anticodons (tRNA-Asp, -Asn, -His and -Tyr), resulting in the hypermodified nucleoside queuosine (7-(((4,5-cis-dihydroxy-2-cyclopenten-1-yl)amino)methyl)-7-deazaguanosine). The sequence is that of Queuine tRNA-ribosyltransferase accessory subunit 2 (qtr2) from Schizosaccharomyces pombe (strain 972 / ATCC 24843) (Fission yeast).